A 567-amino-acid polypeptide reads, in one-letter code: Urease subunit alpha (567 aa).

Residues 129-567 (GGIDTHIHWI…LPMAQRYFLF (439 aa)) form the Urease domain. Residues H134, H136, and K217 each contribute to the Ni(2+) site. Residue K217 is modified to N6-carboxylysine. H219 lines the substrate pocket. The Ni(2+) site is built by H246 and H272. Catalysis depends on H320, which acts as the Proton donor. D360 is a Ni(2+) binding site.

It belongs to the metallo-dependent hydrolases superfamily. Urease alpha subunit family. As to quaternary structure, heterotrimer of UreA (gamma), UreB (beta) and UreC (alpha) subunits. Three heterotrimers associate to form the active enzyme. Ni cation is required as a cofactor. Post-translationally, carboxylation allows a single lysine to coordinate two nickel ions.

Its subcellular location is the cytoplasm. It carries out the reaction urea + 2 H2O + H(+) = hydrogencarbonate + 2 NH4(+). The protein operates within nitrogen metabolism; urea degradation; CO(2) and NH(3) from urea (urease route): step 1/1. This Klebsiella pneumoniae (strain 342) protein is Urease subunit alpha.